Consider the following 694-residue polypeptide: MIIMAREFELKDYRNIGIMAHIDAGKTTTTERILFHTGKIHKIGETHEGASQMDWMPQEQERGITITSAATTAFWKGKRINIIDTPGHVDFTVEVERSLRVLDGAVAVLDAQSGVEPQTETVWRQATNYKVPRIVFVNKMDKAGANFDEAVKSVRTRLGGNAVPIQWNIGAESEFQGFIDLVNMEAWIFDGKAEENGQKIAIPTNLVKIAKEKRQELIDAVANYEEDIMMLALEGQDVDNETLKKAIRKATLTSEFFPAVCGSAFKNKGVKAMIDAVIDYLPSPLDVPAIEAHQGENIITVKPSDDGDFSALAFKVMTDPYVGTLTFFRVYSGILNKGSYVINSTKEKKERIGRILQMHANSRTEIEEVRTGDIAAAVGLKDTTTGDTLIGEKAKMFILEKMIFPEPVISQALEPATKAATEKLSLGLQKLSGEDPTFKTYTNEETGQTIIAGMGELHLDIIVDRLRREFGVEVNVGAPQVSYRETITATAEIEGKHIKQSGGKGQYGHVWIKFEPNHDKGFEFVDKIVGGKIPKEYIKHVQKGLEEKMEIGILAGYPLIDVKATLFDGSYHDVDSSELAYKIAASKALTDGKSKLGATLLEPIMNVDVVIPEDYFGDIMGDLSRRRGQIKETKTRSDGASTIKANVPLSEMFGYATDLRSMTAGRGNYQMIFNHYEKAPKNISDEIIKKRNFN.

Residues 11–285 (KDYRNIGIMA…AVIDYLPSPL (275 aa)) form the tr-type G domain. GTP contacts are provided by residues 20 to 27 (AHIDAGKT), 84 to 88 (DTPGH), and 138 to 141 (NKMD).

This sequence belongs to the TRAFAC class translation factor GTPase superfamily. Classic translation factor GTPase family. EF-G/EF-2 subfamily.

It is found in the cytoplasm. Catalyzes the GTP-dependent ribosomal translocation step during translation elongation. During this step, the ribosome changes from the pre-translocational (PRE) to the post-translocational (POST) state as the newly formed A-site-bound peptidyl-tRNA and P-site-bound deacylated tRNA move to the P and E sites, respectively. Catalyzes the coordinated movement of the two tRNA molecules, the mRNA and conformational changes in the ribosome. The sequence is that of Elongation factor G from Mycoplasma mobile (strain ATCC 43663 / 163K / NCTC 11711) (Mesomycoplasma mobile).